The primary structure comprises 1042 residues: Isoleucine--tRNA ligase (1042 aa).

The 'HIGH' region signature appears at 48-58 (PFATGLPHFGH). The 'KMSKS' region signature appears at 594–598 (KMSKS). An ATP-binding site is contributed by Lys-597.

This sequence belongs to the class-I aminoacyl-tRNA synthetase family. IleS type 2 subfamily. In terms of assembly, monomer. The cofactor is Zn(2+).

It localises to the cytoplasm. It carries out the reaction tRNA(Ile) + L-isoleucine + ATP = L-isoleucyl-tRNA(Ile) + AMP + diphosphate. Catalyzes the attachment of isoleucine to tRNA(Ile). As IleRS can inadvertently accommodate and process structurally similar amino acids such as valine, to avoid such errors it has two additional distinct tRNA(Ile)-dependent editing activities. One activity is designated as 'pretransfer' editing and involves the hydrolysis of activated Val-AMP. The other activity is designated 'posttransfer' editing and involves deacylation of mischarged Val-tRNA(Ile). This is Isoleucine--tRNA ligase from Borreliella burgdorferi (strain ZS7) (Borrelia burgdorferi).